We begin with the raw amino-acid sequence, 322 residues long: Short-chain dehydrogenase TIC 32, chloroplastic (322 aa).

Residues 36–42 (GASSGIG), 88–89 (DL), N115, and T136 each bind NADP(+). Residue S170 participates in substrate binding. Catalysis depends on Y192, which acts as the Proton acceptor. The segment at 298–314 (DTELAKKVWDFSTKLTD) is interaction with calmodulin.

This sequence belongs to the short-chain dehydrogenases/reductases (SDR) family. In terms of assembly, part of the Tic complex. Interacts with TIC110. Expressed in leaves and roots.

Its subcellular location is the plastid. The protein localises to the chloroplast inner membrane. Its function is as follows. Involved in protein precursor import into chloroplasts. Part of the redox regulon consisting of TIC32, TIC 55 and TIC62. The polypeptide is Short-chain dehydrogenase TIC 32, chloroplastic (Arabidopsis thaliana (Mouse-ear cress)).